Reading from the N-terminus, the 101-residue chain is NAD(P)H-quinone oxidoreductase subunit 4L (101 aa).

3 helical membrane passes run 3-23 (LQYF…GLVT), 30-50 (VLMS…AFSN), and 64-84 (IFVI…VLAI).

Belongs to the complex I subunit 4L family. As to quaternary structure, NDH-1 can be composed of about 15 different subunits; different subcomplexes with different compositions have been identified which probably have different functions.

It is found in the cellular thylakoid membrane. The catalysed reaction is a plastoquinone + NADH + (n+1) H(+)(in) = a plastoquinol + NAD(+) + n H(+)(out). The enzyme catalyses a plastoquinone + NADPH + (n+1) H(+)(in) = a plastoquinol + NADP(+) + n H(+)(out). Its function is as follows. NDH-1 shuttles electrons from an unknown electron donor, via FMN and iron-sulfur (Fe-S) centers, to quinones in the respiratory and/or the photosynthetic chain. The immediate electron acceptor for the enzyme in this species is believed to be plastoquinone. Couples the redox reaction to proton translocation, and thus conserves the redox energy in a proton gradient. Cyanobacterial NDH-1 also plays a role in inorganic carbon-concentration. The chain is NAD(P)H-quinone oxidoreductase subunit 4L from Leptolyngbya boryana (Plectonema boryanum).